Reading from the N-terminus, the 1321-residue chain is Bile salt export pump (1321 aa).

Residues 1–62 (MSDSVILRSI…FSSSTDIWLM (62 aa)) lie on the Cytoplasmic side of the membrane. The segment at 16 to 37 (ENDGFESDKSYNNDKKSRLQDE) is disordered. Residues 21-37 (ESDKSYNNDKKSRLQDE) are compositionally biased toward basic and acidic residues. The ABC transmembrane type-1 1 domain maps to 62–385 (MFVGSLCAFL…ASPCLEAFAT (324 aa)). Residues 63 to 83 (FVGSLCAFLHGIAQPGVLLIF) traverse the membrane as a helical segment. Over 84–147 (GTMTDVFIDY…MIKFASYYAG (64 aa)) the chain is Extracellular. Residues asparagine 109, asparagine 116, asparagine 122, and asparagine 125 are each glycosylated (N-linked (GlcNAc...) asparagine). Residues 148 to 168 (IAVAVLITGYIQICFWVIAAA) traverse the membrane as a helical segment. The Cytoplasmic segment spans residues 169–215 (RQIQKMRKFYFRRIMRMEIGWFDCNSVGELNTRFSDDINKINDAIAD). The helical transmembrane segment at 216–236 (QMALFIQRMTSTICGFLLGFF) threads the bilayer. Topologically, residues 237-240 (RGWK) are extracellular. The helical transmembrane segment at 241–261 (LTLVIISVSPLIGIGAATIGL) threads the bilayer. Topologically, residues 262 to 319 (SVSKFTDYELKAYAKAGVVADEVISSMRTVAAFGGEKREVERYEKNLVFAQRWGIRKG) are cytoplasmic. A helical transmembrane segment spans residues 320–340 (IVMGFFTGFVWCLIFLCYALA). Topologically, residues 341 to 353 (FWYGSTLVLDEGE) are extracellular. Residues 354-374 (YTPGTLVQIFLSVIVGALNLG) traverse the membrane as a helical segment. Over 375-755 (NASPCLEAFA…KFSAPEWPYM (381 aa)) the chain is Cytoplasmic. Residues 420-656 (IEFHNVTFHY…KGVYFTLVTL (237 aa)) form the ABC transporter 1 domain. Residue 455-462 (GPSGAGKS) participates in ATP binding. The residue at position 586 (threonine 586) is a Phosphothreonine. Position 587 is a phosphoserine (serine 587). Residues 651–672 (FTLVTLQSQGNQALNEEDIKDA) are interaction with HAX1. Serine 690, serine 701, and serine 704 each carry phosphoserine. In terms of domain architecture, ABC transmembrane type-1 2 spans 755 to 1043 (MLVGSVGAAV…AFSYTPSYAK (289 aa)). Residues 756–776 (LVGSVGAAVNGTVTPLYAFLF) traverse the membrane as a helical segment. Residues 777-794 (SQILGTFSIPDKEEQRSQ) lie on the Extracellular side of the membrane. A helical transmembrane segment spans residues 795–815 (INGVCLLFVAMGCVSLFTQFL). Over 816-869 (QGYAFAKSGELLTKRLRKFGFRAMLGQDIAWFDDLRNSPGALTTRLATDASQVQ) the chain is Cytoplasmic. The next 2 membrane-spanning stretches (helical) occupy residues 870–890 (GAAGSQIGMIVNSFTNVTVAM) and 891–911 (IIAFSFSWKLSLVILCFFPFL). The Cytoplasmic segment spans residues 912-979 (ALSGATQTRM…PFKTAIQKAN (68 aa)). Residues 980–1000 (IYGFCFAFAQCIMFIANSASY) form a helical membrane-spanning segment. Over 1001-1011 (RYGGYLISNEG) the chain is Extracellular. The chain crosses the membrane as a helical span at residues 1012-1032 (LHFSYVFRVISAVVLSATALG). The Cytoplasmic portion of the chain corresponds to 1033 to 1321 (RAFSYTPSYA…KLVTTGSPIS (289 aa)). The ABC transporter 2 domain maps to 1078 to 1316 (IDFVDCKFTY…KGAYYKLVTT (239 aa)). ATP is bound at residue 1113-1120 (GSSGCGKS). Serine 1214 carries the post-translational modification Phosphoserine. The interval 1311-1314 (YKLV) is mediates internalization from the plasma membrane. Residue serine 1321 is modified to Phosphoserine.

The protein belongs to the ABC transporter superfamily. ABCB family. Multidrug resistance exporter (TC 3.A.1.201) subfamily. Interacts with HAX1. Interacts with the adapter protein complex 2 (AP-2) throught AP2A2 or AP2A1; this interaction regulates cell membrane expression of ABCB11 through its internalization in a clathrin-dependent manner and its subsequent degradation. N-glycosylated. In terms of processing, ubiquitinated; short-chain ubiquitination regulates cell-Surface expression of ABCB11. As to expression, expressed predominantly, if not exclusively in the liver, where it was further localized to the canalicular microvilli and to subcanalicular vesicles of the hepatocytes by in situ.

It is found in the apical cell membrane. Its subcellular location is the recycling endosome membrane. The protein localises to the endosome. The protein resides in the cell membrane. It catalyses the reaction cholate(in) + ATP + H2O = cholate(out) + ADP + phosphate + H(+). The catalysed reaction is taurocholate(in) + ATP + H2O = taurocholate(out) + ADP + phosphate + H(+). The enzyme catalyses glycocholate(in) + ATP + H2O = glycocholate(out) + ADP + phosphate + H(+). It carries out the reaction glycochenodeoxycholate(in) + ATP + H2O = glycochenodeoxycholate(out) + ADP + phosphate + H(+). It catalyses the reaction taurochenodeoxycholate(in) + ATP + H2O = taurochenodeoxycholate(out) + ADP + phosphate + H(+). The catalysed reaction is glycoursodeoxycholate(in) + ATP + H2O = glycoursodeoxycholate(out) + ADP + phosphate + H(+). The enzyme catalyses tauroursodeoxycholate(in) + ATP + H2O = tauroursodeoxycholate(out) + ADP + phosphate + H(+). It carries out the reaction taurodeoxycholate(in) + ATP + H2O = taurodeoxycholate(out) + ADP + phosphate + H(+). It catalyses the reaction taurolithocholate 3-sulfate(in) + ATP + H2O = taurolithocholate 3-sulfate(out) + ADP + phosphate + H(+). The catalysed reaction is pravastatin(in) + ATP + H2O = pravastatin(out) + ADP + phosphate + H(+). The uptake of taurocholate is inhibited by taurolithocholate sulfate with an IC(50) of 9 uM. Pravastatin competitively inhibits the transport of taurocholic acid. Cyclosporin A, glibenclamide, rifampicin and troglitazonestrongly competitively inhibit the transport activity of taurocholate. The canalicular transport activity of taurocholate is strongly dependent on canalicular membrane cholesterol content. The uptake of taurocholate is increased by short- and medium-chain fatty acids. Cholesterol increases transport capacity of taurocholate without affecting the affinity for the substrate. Its function is as follows. Catalyzes the transport of the major hydrophobic bile salts, such as taurine and glycine-conjugated cholic acid across the canalicular membrane of hepatocytes in an ATP-dependent manner, therefore participates in hepatic bile acid homeostasis and consequently to lipid homeostasis through regulation of biliary lipid secretion in a bile salts dependent manner. Transports taurine-conjugated bile salts more rapidly than glycine-conjugated bile salts. Also transports non-bile acid compounds, such as pravastatin and fexofenadine in an ATP-dependent manner and may be involved in their biliary excretion. The polypeptide is Bile salt export pump (Homo sapiens (Human)).